Reading from the N-terminus, the 352-residue chain is Histidine biosynthesis bifunctional protein HisB (352 aa).

A histidinol-phosphatase region spans residues 1–163 (MKKILFIDRD…MVASAIINDA (163 aa)). The active-site Nucleophile is Asp8. Residues Asp8 and Asp10 each contribute to the Mg(2+) site. The active-site Proton donor is the Asp10. Cys91, His93, Cys99, and Cys101 together coordinate Zn(2+). Asp128 serves as a coordination point for Mg(2+). The segment at 164 to 352 (RKASVQRKTK…NYLPSTKGVL (189 aa)) is imidazoleglycerol-phosphate dehydratase.

It in the N-terminal section; belongs to the histidinol-phosphatase family. In the C-terminal section; belongs to the imidazoleglycerol-phosphate dehydratase family. Requires Mg(2+) as cofactor. The cofactor is Zn(2+).

Its subcellular location is the cytoplasm. It carries out the reaction D-erythro-1-(imidazol-4-yl)glycerol 3-phosphate = 3-(imidazol-4-yl)-2-oxopropyl phosphate + H2O. It catalyses the reaction L-histidinol phosphate + H2O = L-histidinol + phosphate. The protein operates within amino-acid biosynthesis; L-histidine biosynthesis; L-histidine from 5-phospho-alpha-D-ribose 1-diphosphate: step 6/9. Its pathway is amino-acid biosynthesis; L-histidine biosynthesis; L-histidine from 5-phospho-alpha-D-ribose 1-diphosphate: step 8/9. This Legionella pneumophila subsp. pneumophila (strain Philadelphia 1 / ATCC 33152 / DSM 7513) protein is Histidine biosynthesis bifunctional protein HisB.